A 243-amino-acid chain; its full sequence is Carboxy-S-adenosyl-L-methionine synthase (243 aa).

S-adenosyl-L-methionine is bound by residues Tyr40, Gly65 to Ser67, Asp90 to Asn91, Asp118 to Ile119, Asn133, and Arg200.

It belongs to the class I-like SAM-binding methyltransferase superfamily. Cx-SAM synthase family. As to quaternary structure, homodimer.

It catalyses the reaction prephenate + S-adenosyl-L-methionine = carboxy-S-adenosyl-L-methionine + 3-phenylpyruvate + H2O. Its function is as follows. Catalyzes the conversion of S-adenosyl-L-methionine (SAM) to carboxy-S-adenosyl-L-methionine (Cx-SAM). This Shewanella denitrificans (strain OS217 / ATCC BAA-1090 / DSM 15013) protein is Carboxy-S-adenosyl-L-methionine synthase.